Consider the following 153-residue polypeptide: Transcriptional repressor NrdR (153 aa).

A zinc finger spans residues 3-34; it reads CPYCGHPDTRVVDSRPSDEGMAIRRRRECPSC. Positions 49–136 constitute an ATP-cone domain; sequence LMVVKRDGRK…VYREFDSVER (88 aa).

Belongs to the NrdR family. It depends on Zn(2+) as a cofactor.

Functionally, negatively regulates transcription of bacterial ribonucleotide reductase nrd genes and operons by binding to NrdR-boxes. The polypeptide is Transcriptional repressor NrdR (Thermus thermophilus (strain ATCC BAA-163 / DSM 7039 / HB27)).